A 548-amino-acid polypeptide reads, in one-letter code: Guanine nucleotide-binding protein-like 3 (548 aa).

Positions 1 to 45 are enriched in basic residues; that stretch reads MKRPKLKKGSKRLSCHKRYKIQKKVREHNRKARKEAKKSGTRKQK. The disordered stretch occupies residues 1-118; that stretch reads MKRPKLKKGS…KKNKGTKAAE (118 aa). A coiled-coil region spans residues 58 to 114; the sequence is AEILQEAQRRRQQEEELKQNRKLERQKEVAKRRKLDEKKKKNSEKREKRDNKKNKGT. Positions 64-107 are enriched in basic and acidic residues; that stretch reads AQRRRQQEEELKQNRKLERQKEVAKRRKLDEKKKKNSEKREKRD. The CP-type G domain maps to 125-305; that stretch reads CRHVNKVLEQ…MLDSPALVVS (181 aa). GTP-binding positions include 172–175, 256–263, and 298–301; these read NKAD, ANVGKSSV, and DSPA. The interval 459-548 is disordered; sequence RQLVEPEPIE…DAYDFNTDFV (90 aa). Residues 465–497 show a composition bias toward acidic residues; the sequence is EPIEEELEANDGEEDVEEEHEGSEEEEDEEVEQ. A compositionally biased stretch (basic and acidic residues) spans 501–523; sequence SAKEQEVVSAKEQEVVSAKEQDS. A compositionally biased stretch (polar residues) spans 524–534; that stretch reads KSAGPSVSFDQ.

Belongs to the TRAFAC class YlqF/YawG GTPase family.

It is found in the nucleus. The protein localises to the nucleolus. In terms of biological role, may play a role in regulating cellular proliferation. The chain is Guanine nucleotide-binding protein-like 3 (gnl3) from Xenopus tropicalis (Western clawed frog).